Here is a 277-residue protein sequence, read N- to C-terminus: Diaminopimelate epimerase (277 aa).

2 residues coordinate substrate: N11 and N65. C74 (proton donor) is an active-site residue. Substrate contacts are provided by residues G75–N76, N180, and E198–R199. C208 functions as the Proton acceptor in the catalytic mechanism. G209–T210 contributes to the substrate binding site.

Belongs to the diaminopimelate epimerase family. In terms of assembly, homodimer.

The protein resides in the cytoplasm. It carries out the reaction (2S,6S)-2,6-diaminopimelate = meso-2,6-diaminopimelate. It participates in amino-acid biosynthesis; L-lysine biosynthesis via DAP pathway; DL-2,6-diaminopimelate from LL-2,6-diaminopimelate: step 1/1. Functionally, catalyzes the stereoinversion of LL-2,6-diaminopimelate (L,L-DAP) to meso-diaminopimelate (meso-DAP), a precursor of L-lysine and an essential component of the bacterial peptidoglycan. This chain is Diaminopimelate epimerase, found in Gemmatimonas aurantiaca (strain DSM 14586 / JCM 11422 / NBRC 100505 / T-27).